The following is a 486-amino-acid chain: Galactose-1-phosphate uridylyltransferase (486 aa).

Belongs to the galactose-1-phosphate uridylyltransferase type 2 family.

The protein localises to the cytoplasm. It carries out the reaction alpha-D-galactose 1-phosphate + UDP-alpha-D-glucose = alpha-D-glucose 1-phosphate + UDP-alpha-D-galactose. Its pathway is carbohydrate metabolism; galactose metabolism. This Lacticaseibacillus casei (strain BL23) (Lactobacillus casei) protein is Galactose-1-phosphate uridylyltransferase.